Consider the following 816-residue polypeptide: Neuronal PAS domain-containing protein 2 (816 aa).

A compositionally biased stretch (basic and acidic residues) spans 1–10 (MDEDEKDRAK). The segment at 1–21 (MDEDEKDRAKRASRNKSEKKR) is disordered. Residues 1 to 61 (MDEDEKDRAK…VIGFLQKHNE (61 aa)) are sufficient for heterodimer formation with BMAL1, E-box binding and for the effect of NADPH. The region spanning 9 to 59 (AKRASRNKSEKKRRDQFNVLIKELSSMLPGNTRKMDKTTVLEKVIGFLQKH) is the bHLH domain. Residues 82 to 152 (NEEFTQLMLE…KILSSHMLVT (71 aa)) form the PAS 1 domain. Residues histidine 119 and histidine 171 each contribute to the heme b site. The region spanning 237–307 (FLKEMCVADE…RCHQHLMQFG (71 aa)) is the PAS 2 domain. A PAC domain is found at 311-354 (SCCYRFLTKGQQWIWLQTHYYITYHQWNSKPEFIVCTHSVVSYA). 4 disordered regions span residues 364–431 (LALE…STPT), 610–639 (ISAQGPKPMRSSQLLPASGRSLSSLPSQFS), 685–705 (QPMMPGSCDARQPSEVSRTGR), and 742–816 (PSFP…LSES). Over residues 400–413 (SGLPSSPSPSASSR) the composition is skewed to low complexity. The segment covering 420 to 431 (HTAMSEPTSTPT) has biased composition (polar residues). The span at 623 to 639 (LLPASGRSLSSLPSQFS) shows a compositional bias: low complexity. The segment covering 745–759 (PASRPSPLQPAQAQQ) has biased composition (low complexity). A compositionally biased stretch (polar residues) spans 780–789 (LLSTFSQQPG). Over residues 806–816 (PSRRVSRLSES) the composition is skewed to basic residues.

In terms of assembly, component of the circadian clock oscillator which includes the CRY proteins, CLOCK or NPAS2, BMAL1 or BMAL2, CSNK1D and/or CSNK1E, TIMELESS and the PER proteins. Efficient DNA binding requires dimerization with another bHLH protein. Interacts with NCOA3, KAT2B and CREBBP. Forms a heterodimer with BMAL1 and this heterodimerization is required for E-box-dependent transactivation. Interacts with EP300. The cofactor is heme. As to expression, expressed in the retinal ganglion cells (at protein level). Expressed in the hypothalamic suprachiasmatic nuclei (SCN) of the brain. Also found in spinal cord, and to a lesser extent in colon, small intestine and uterus. Exhibits a diurnal variation in its expression in the brain.

The protein resides in the nucleus. Its activity is regulated as follows. Carbon monoxide (CO) and the redox state of the cell can modulate the transcriptional activity of the NPAS2-BMAL1 heterodimer. NADH and NADPH enhance the DNA-binding activity of the heterodimer whereas CO binds the heme group in NPAS2 and inhibits the DNA-binding activity of the heterodimer. Its function is as follows. Transcriptional activator which forms a core component of the circadian clock. The circadian clock, an internal time-keeping system, regulates various physiological processes through the generation of approximately 24 hour circadian rhythms in gene expression, which are translated into rhythms in metabolism and behavior. It is derived from the Latin roots 'circa' (about) and 'diem' (day) and acts as an important regulator of a wide array of physiological functions including metabolism, sleep, body temperature, blood pressure, endocrine, immune, cardiovascular, and renal function. Consists of two major components: the central clock, residing in the suprachiasmatic nucleus (SCN) of the brain, and the peripheral clocks that are present in nearly every tissue and organ system. Both the central and peripheral clocks can be reset by environmental cues, also known as Zeitgebers (German for 'timegivers'). The predominant Zeitgeber for the central clock is light, which is sensed by retina and signals directly to the SCN. The central clock entrains the peripheral clocks through neuronal and hormonal signals, body temperature and feeding-related cues, aligning all clocks with the external light/dark cycle. Circadian rhythms allow an organism to achieve temporal homeostasis with its environment at the molecular level by regulating gene expression to create a peak of protein expression once every 24 hours to control when a particular physiological process is most active with respect to the solar day. Transcription and translation of core clock components (CLOCK, NPAS2, BMAL1, BMAL2, PER1, PER2, PER3, CRY1 and CRY2) plays a critical role in rhythm generation, whereas delays imposed by post-translational modifications (PTMs) are important for determining the period (tau) of the rhythms (tau refers to the period of a rhythm and is the length, in time, of one complete cycle). A diurnal rhythm is synchronized with the day/night cycle, while the ultradian and infradian rhythms have a period shorter and longer than 24 hours, respectively. Disruptions in the circadian rhythms contribute to the pathology of cardiovascular diseases, cancer, metabolic syndromes and aging. A transcription/translation feedback loop (TTFL) forms the core of the molecular circadian clock mechanism. Transcription factors, CLOCK or NPAS2 and BMAL1 or BMAL2, form the positive limb of the feedback loop, act in the form of a heterodimer and activate the transcription of core clock genes and clock-controlled genes (involved in key metabolic processes), harboring E-box elements (5'-CACGTG-3') within their promoters. The core clock genes: PER1/2/3 and CRY1/2 which are transcriptional repressors form the negative limb of the feedback loop and interact with the CLOCK|NPAS2-BMAL1|BMAL2 heterodimer inhibiting its activity and thereby negatively regulating their own expression. This heterodimer also activates nuclear receptors NR1D1/2 and RORA/B/G, which form a second feedback loop and which activate and repress BMAL1 transcription, respectively. The NPAS2-BMAL1 heterodimer positively regulates the expression of MAOA, F7 and LDHA and modulates the circadian rhythm of daytime contrast sensitivity by regulating the rhythmic expression of adenylate cyclase type 1 (ADCY1) in the retina. NPAS2 plays an important role in sleep homeostasis and in maintaining circadian behaviors in normal light/dark and feeding conditions and in the effective synchronization of feeding behavior with scheduled food availability. Regulates the gene transcription of key metabolic pathways in the liver and is involved in DNA damage response by regulating several cell cycle and DNA repair genes. Controls the circadian rhythm of NR0B2 expression by binding rhythmically to its promoter. Mediates the diurnal variation in the expression of GABARA1 receptor in the brain and contributes to the regulation of anxiety-like behaviors and GABAergic neurotransmission in the ventral striatum. In Mus musculus (Mouse), this protein is Neuronal PAS domain-containing protein 2 (Npas2).